The following is a 640-amino-acid chain: Transcription factor VHR1 (640 aa).

The span at Asn118–Thr128 shows a compositional bias: low complexity. A disordered region spans residues Asn118–Gln139. A Phosphoserine modification is found at Ser409. Residues Asn580–Leu640 form a disordered region. Positions Asn588–Asn608 are enriched in low complexity. The segment covering Lys621–Leu631 has biased composition (polar residues).

It belongs to the VHR1 family.

It localises to the cytoplasm. It is found in the nucleus. Functionally, transcription factor that binds to the VHRE consensus sequence in promoters of VHT1 and BIO5, and regulates their biotin-dependent expression. The sequence is that of Transcription factor VHR1 (VHR1) from Saccharomyces cerevisiae (strain ATCC 204508 / S288c) (Baker's yeast).